The chain runs to 351 residues: Fe(3+) ions import ATP-binding protein FbpC (351 aa).

The ABC transporter domain maps to 7-237 (VVLKNICKRF…PKSMFMANFM (231 aa)). An ATP-binding site is contributed by 39–46 (GPSGCGKT).

Belongs to the ABC transporter superfamily. Fe(3+) ion importer (TC 3.A.1.10) family. As to quaternary structure, the complex is composed of two ATP-binding proteins (FbpC), two transmembrane proteins (FbpB) and a solute-binding protein (FbpA).

The protein localises to the cell inner membrane. The enzyme catalyses Fe(3+)(out) + ATP + H2O = Fe(3+)(in) + ADP + phosphate + H(+). Functionally, part of the ABC transporter complex FbpABC involved in Fe(3+) ions import. Responsible for energy coupling to the transport system. This Vibrio cholerae serotype O1 (strain ATCC 39315 / El Tor Inaba N16961) protein is Fe(3+) ions import ATP-binding protein FbpC.